Reading from the N-terminus, the 238-residue chain is Large ribosomal subunit protein uL2 (238 aa).

The interval Asn198–Arg238 is disordered. A compositionally biased stretch (polar residues) spans His206–Arg217.

The protein belongs to the universal ribosomal protein uL2 family. Part of the 50S ribosomal subunit. Forms a bridge to the 30S subunit in the 70S ribosome.

One of the primary rRNA binding proteins. Required for association of the 30S and 50S subunits to form the 70S ribosome, for tRNA binding and peptide bond formation. It has been suggested to have peptidyltransferase activity; this is somewhat controversial. Makes several contacts with the 16S rRNA in the 70S ribosome. This Hyperthermus butylicus (strain DSM 5456 / JCM 9403 / PLM1-5) protein is Large ribosomal subunit protein uL2.